The following is a 384-amino-acid chain: Ferrochelatase, mitochondrial (384 aa).

A [2Fe-2S] cluster-binding site is contributed by C156. Active-site residues include H190 and N343. Positions 363, 366, and 371 each coordinate [2Fe-2S] cluster.

The protein belongs to the ferrochelatase family. As to quaternary structure, homodimer. Homotetramer. The cofactor is [2Fe-2S] cluster.

The protein resides in the mitochondrion inner membrane. The catalysed reaction is heme b + 2 H(+) = protoporphyrin IX + Fe(2+). It participates in porphyrin-containing compound metabolism; protoheme biosynthesis; protoheme from protoporphyrin-IX: step 1/1. Functionally, catalyzes the ferrous insertion into protoporphyrin IX. Terminal enzyme in heme biosynthesis. Contains four conserved cysteines that function as cluster ligands and play a crucial role in maintaining protein structure. The polypeptide is Ferrochelatase, mitochondrial (Drosophila melanogaster (Fruit fly)).